Reading from the N-terminus, the 828-residue chain is Glycerol-3-phosphate acyltransferase (828 aa).

The short motif at 309-314 (CHRSHI) is the HXXXXD motif element.

It belongs to the GPAT/DAPAT family.

It is found in the cell inner membrane. The enzyme catalyses sn-glycerol 3-phosphate + an acyl-CoA = a 1-acyl-sn-glycero-3-phosphate + CoA. The protein operates within phospholipid metabolism; CDP-diacylglycerol biosynthesis; CDP-diacylglycerol from sn-glycerol 3-phosphate: step 1/3. This is Glycerol-3-phosphate acyltransferase from Pseudomonas entomophila (strain L48).